Consider the following 336-residue polypeptide: Glyceraldehyde-3-phosphate dehydrogenase (336 aa).

NAD(+)-binding positions include 12-13, Asp-34, and Ser-120; that span reads RI. Residues 150–152, Thr-181, Arg-198, 211–212, and Arg-234 contribute to the D-glyceraldehyde 3-phosphate site; these read SCT and TG. The Nucleophile role is filled by Cys-151. Asn-316 serves as a coordination point for NAD(+).

It belongs to the glyceraldehyde-3-phosphate dehydrogenase family. As to quaternary structure, homotetramer.

Its subcellular location is the cytoplasm. The enzyme catalyses D-glyceraldehyde 3-phosphate + phosphate + NAD(+) = (2R)-3-phospho-glyceroyl phosphate + NADH + H(+). The protein operates within carbohydrate degradation; glycolysis; pyruvate from D-glyceraldehyde 3-phosphate: step 1/5. Its function is as follows. Catalyzes the oxidative phosphorylation of glyceraldehyde 3-phosphate (G3P) to 1,3-bisphosphoglycerate (BPG) using the cofactor NAD. The first reaction step involves the formation of a hemiacetal intermediate between G3P and a cysteine residue, and this hemiacetal intermediate is then oxidized to a thioester, with concomitant reduction of NAD to NADH. The reduced NADH is then exchanged with the second NAD, and the thioester is attacked by a nucleophilic inorganic phosphate to produce BPG. The polypeptide is Glyceraldehyde-3-phosphate dehydrogenase (gapA) (Staphylococcus aureus).